The following is a 574-amino-acid chain: Excitatory amino acid transporter 2 (574 aa).

At 1–44 (MASTEGANNMPKQVEVRMHDSHLGSEEPKHRHLGLRLCDKLGKN) the chain is on the cytoplasmic side. Ser-3, Ser-21, and Ser-25 each carry phosphoserine. The S-palmitoyl cysteine moiety is linked to residue Cys-38. A helical membrane pass occupies residues 45–64 (LLLTLTVFGVILGAVCGGLL). Residues 65–87 (RLASPIHPDVVMLIAFPGDILMR) lie on the Extracellular side of the membrane. Residues 88-108 (MLKMLILPLIISSLITGLSGL) traverse the membrane as a helical segment. Over 109–120 (DAKASGRLGTRA) the chain is Cytoplasmic. A helical transmembrane segment spans residues 121 to 142 (MVYYMSTTIIAAVLGVILVLAI). Topologically, residues 143–235 (HPGNPKLKKQ…TKMVIKKGLE (93 aa)) are extracellular. Asn-206 and Asn-216 each carry an N-linked (GlcNAc...) asparagine glycan. Residues 236–259 (FKDGMNVLGLIGFFIAFGIAMGKM) traverse the membrane as a helical segment. At 260–268 (GDQAKLMVD) the chain is on the cytoplasmic side. A helical membrane pass occupies residues 269–296 (FFNILNEIVMKLVIMIMWYSPLGIACLI). Over 297-317 (CGKIIAIKDLEVVARQLGMYM) the chain is Extracellular. Residues 318-339 (VTVIIGLIIHGGIFLPLIYFVV) traverse the membrane as a helical segment. Over 340-344 (TRKNP) the chain is Cytoplasmic. The segment at residues 345-375 (FSFFAGIFQAWITALGTASSAGTLPVTFRCL) is an intramembrane region (discontinuously helical). 362–364 (ASS) is an L-aspartate binding site. The Cytoplasmic segment spans residues 376 to 384 (EENLGIDKR). A helical transmembrane segment spans residues 385–411 (VTRFVLPVGATINMDGTALYEAVAAIF). Na(+)-binding residues include Gly-393, Thr-395, and Asn-397. Thr-401 serves as a coordination point for L-aspartate. Residues 412-424 (IAQMNGVVLDGGQ) lie on the Extracellular side of the membrane. Residues 425 to 458 (IVTVSLTATLASVGAASIPSAGLVTMLLILTAVG) constitute an intramembrane region (discontinuously helical). 442 to 446 (IPSAG) contributes to the L-aspartate binding site. The Extracellular segment spans residues 459-471 (LPTEDISLLVAVD). A helical transmembrane segment spans residues 472–493 (WLLDRMRTSVNVVGDSFGAGIV). The L-aspartate site is built by Asp-475 and Asn-482. Na(+) is bound by residues Asn-482 and Asp-486. Residues 494–574 (YHLSKSELDT…VEEEPWKREK (81 aa)) lie on the Cytoplasmic side of the membrane. Ser-506, Ser-521, Ser-532, and Ser-534 each carry phosphoserine. The residue at position 539 (Tyr-539) is a Phosphotyrosine. Residues Ser-544, Ser-560, and Ser-564 each carry the phosphoserine modification.

Belongs to the dicarboxylate/amino acid:cation symporter (DAACS) (TC 2.A.23) family. SLC1A2 subfamily. As to quaternary structure, homotrimer. Isoform 3 can oligomerize with isoform 1. Interacts with AJUBA. Glycosylated. In terms of processing, palmitoylation at Cys-38 is not required for correct subcellular localization, but is important for glutamate uptake activity.

Its subcellular location is the cell membrane. The enzyme catalyses K(+)(in) + L-glutamate(out) + 3 Na(+)(out) + H(+)(out) = K(+)(out) + L-glutamate(in) + 3 Na(+)(in) + H(+)(in). It carries out the reaction K(+)(in) + L-aspartate(out) + 3 Na(+)(out) + H(+)(out) = K(+)(out) + L-aspartate(in) + 3 Na(+)(in) + H(+)(in). The catalysed reaction is D-aspartate(out) + K(+)(in) + 3 Na(+)(out) + H(+)(out) = D-aspartate(in) + K(+)(out) + 3 Na(+)(in) + H(+)(in). In terms of biological role, sodium-dependent, high-affinity amino acid transporter that mediates the uptake of L-glutamate and also L-aspartate and D-aspartate. Functions as a symporter that transports one amino acid molecule together with two or three Na(+) ions and one proton, in parallel with the counter-transport of one K(+) ion. Mediates Cl(-) flux that is not coupled to amino acid transport; this avoids the accumulation of negative charges due to aspartate and Na(+) symport. Essential for the rapid removal of released glutamate from the synaptic cleft, and for terminating the postsynaptic action of glutamate. The chain is Excitatory amino acid transporter 2 from Homo sapiens (Human).